The following is a 276-amino-acid chain: Bifunctional protein FolD (276 aa).

NADP(+) is bound by residues 158–160 (NRS), Ser-183, and Ile-224.

It belongs to the tetrahydrofolate dehydrogenase/cyclohydrolase family. As to quaternary structure, homodimer.

The catalysed reaction is (6R)-5,10-methylene-5,6,7,8-tetrahydrofolate + NADP(+) = (6R)-5,10-methenyltetrahydrofolate + NADPH. It carries out the reaction (6R)-5,10-methenyltetrahydrofolate + H2O = (6R)-10-formyltetrahydrofolate + H(+). The protein operates within one-carbon metabolism; tetrahydrofolate interconversion. Its function is as follows. Catalyzes the oxidation of 5,10-methylenetetrahydrofolate to 5,10-methenyltetrahydrofolate and then the hydrolysis of 5,10-methenyltetrahydrofolate to 10-formyltetrahydrofolate. The chain is Bifunctional protein FolD from Picrophilus torridus (strain ATCC 700027 / DSM 9790 / JCM 10055 / NBRC 100828 / KAW 2/3).